Here is a 330-residue protein sequence, read N- to C-terminus: NmrA-like family domain-containing oxidoreductase notO (330 aa).

NADP(+)-binding positions include V12 to L17, H38 to Q42, R59 to S60, I80 to A82, and L160 to G163. The helical transmembrane segment at V12 to I32 threads the bilayer. The tract at residues S158 to A202 is interaction with ASS1. N-linked (GlcNAc...) asparagine glycosylation is found at N180 and N207.

The protein belongs to the NmrA-type oxidoreductase family.

The protein resides in the membrane. In terms of biological role, nmrA-like family domain-containing oxidoreductase; part of the gene cluster that mediates the biosynthesis of notoamide, a fungal indole alkaloid that belongs to a family of natural products containing a characteristic bicyclo[2.2.2]diazaoctane core. The first step of notoamide biosynthesis involves coupling of L-proline and L-tryptophan by the bimodular NRPS notE, to produce cyclo-L-tryptophan-L-proline called brevianamide F. The reverse prenyltransferase notF then acts as a deoxybrevianamide E synthase and converts brevianamide F to deoxybrevianamide E via reverse prenylation at C-2 of the indole ring leading to the bicyclo[2.2.2]diazaoctane core. Deoxybrevianamide E is further hydroxylated at C-6 of the indole ring, likely catalyzed by the cytochrome P450 monooxygenase notG, to yield 6-hydroxy-deoxybrevianamide E. 6-hydroxy-deoxybrevianamide E is a specific substrate of the prenyltransferase notC for normal prenylation at C-7 to produce 6-hydroxy-7-prenyl-deoxybrevianamide, also called notoamide S. As the proposed pivotal branching point in notoamide biosynthesis, notoamide S can be diverted to notoamide E through an oxidative pyran ring closure putatively catalyzed by either notH cytochrome P450 monooxygenase or the notD FAD-linked oxidoreductase. This step would be followed by an indole 2,3-epoxidation-initiated pinacol-like rearrangement catalyzed by the notB FAD-dependent monooxygenase leading to the formation of notoamide C and notoamide D. On the other hand notoamide S is converted to notoamide T by notH (or notD), a bifunctional oxidase that also functions as the intramolecular Diels-Alderase responsible for generation of (+)-notoamide T. To generate antipodal (-)-notoaminide T, notH' (or notD') in Aspergillus versicolor is expected to catalyze a Diels-Alder reaction leading to the opposite stereochemistry. The remaining oxidoreductase notD (or notH) likely catalyzes the oxidative pyran ring formation to yield (+)-stephacidin A. The FAD-dependent monooxygenase notI is highly similar to notB and is predicted to catalyze a similar conversion from (+)-stephacidin A to (-)-notoamide B via the 2,3-epoxidation of (+)-stephacidin A followed by a pinacol-type rearrangement. Finally, it remains unclear which enzyme could be responsible for the final hydroxylation steps leading to notoamide A and sclerotiamide. The function of notO in the notoamide biosynthesis has not been determined yet. The polypeptide is NmrA-like family domain-containing oxidoreductase notO (Aspergillus sp. (strain MF297-2)).